Here is a 213-residue protein sequence, read N- to C-terminus: Nucleolar protein 12 (213 aa).

The stretch at 33–96 forms a coiled coil; that stretch reads GFHKRKVERK…RLVTAKTESV (64 aa). The interval 109–213 is disordered; the sequence is TISDLDLSGA…LTGKAQHSRE (105 aa). Residues 130–139 are compositionally biased toward acidic residues; it reads AGDESEEEAS. Basic residues predominate over residues 170–182; it reads AHSRKKVKRKHPR.

This sequence belongs to the RRP17 family. Interacts with KIAA1191.

It localises to the nucleus. Its subcellular location is the nucleolus. The protein localises to the cytoplasm. Multifunctional RNA binding protein that plays a role in RNA metabolism and DNA maintenance. Participates in the resolution of DNA stress and the maintenance of genome integrity by localizing to sites of DNA insults. Also plays a role in proper nucleolar organization by limiting nucleolar size and regulating nucleolar number. Mechanistically, regulates the nucleolar levels of fibrillarin and nucleolin, two key players in pre-rRNA processing and ribosome assembly. The protein is Nucleolar protein 12 (NOL12) of Pongo abelii (Sumatran orangutan).